The chain runs to 358 residues: uncharacterized protein (358 aa).

This sequence belongs to the methyltransferase superfamily.

This is an uncharacterized protein from Mycobacterium tuberculosis (strain CDC 1551 / Oshkosh).